The sequence spans 151 residues: Globin-2 B chain (151 aa).

At serine 1 the chain carries N-acetylserine. The 141-residue stretch at valine 11 to leucine 151 folds into the Globin domain. Histidine 103 serves as a coordination point for heme b.

The protein belongs to the globin family. As to quaternary structure, heterotetramer of two alpha chains and two beta chains.

The protein is Globin-2 B chain of Anadara inaequivalvis (Inequivalve ark).